Reading from the N-terminus, the 150-residue chain is Large ribosomal subunit protein bL9 (150 aa).

Belongs to the bacterial ribosomal protein bL9 family.

In terms of biological role, binds to the 23S rRNA. The protein is Large ribosomal subunit protein bL9 of Halorhodospira halophila (strain DSM 244 / SL1) (Ectothiorhodospira halophila (strain DSM 244 / SL1)).